Consider the following 250-residue polypeptide: Sulfate transporter CysZ (250 aa).

4 helical membrane-spanning segments follow: residues 27–47, 64–84, 150–170, and 210–230; these read FVVL…YYLF, FLSW…LATF, FLLL…WFLF, and MLVA…PVAV.

Belongs to the CysZ family.

Its subcellular location is the cell inner membrane. Its function is as follows. High affinity, high specificity proton-dependent sulfate transporter, which mediates sulfate uptake. Provides the sulfur source for the cysteine synthesis pathway. In Vibrio cholerae serotype O1 (strain ATCC 39315 / El Tor Inaba N16961), this protein is Sulfate transporter CysZ.